A 337-amino-acid chain; its full sequence is ERI1 exoribonuclease 3 (337 aa).

The region spanning 146–320 is the Exonuclease domain; it reads FLVLDFEATC…DDCKNIANIM (175 aa). Residues D150, E152, and D249 each coordinate Mg(2+). Residue E152 is the Proton acceptor of the active site. Residue E152 coordinates AMP. The active-site Proton acceptor is H307. Position 307 (H307) interacts with AMP. Residue D312 coordinates Mg(2+).

Interacts with PRNP. Mg(2+) is required as a cofactor. In terms of tissue distribution, highly expressed in the brain, heart, thyroid and testis. Expressed at low levels in the muscle cells, liver, pancreas and kidney.

The chain is ERI1 exoribonuclease 3 (Eri3) from Mus musculus (Mouse).